The following is a 185-amino-acid chain: Ribosome-recycling factor (185 aa).

This sequence belongs to the RRF family.

It localises to the cytoplasm. Functionally, responsible for the release of ribosomes from messenger RNA at the termination of protein biosynthesis. May increase the efficiency of translation by recycling ribosomes from one round of translation to another. This chain is Ribosome-recycling factor, found in Neorickettsia sennetsu (strain ATCC VR-367 / Miyayama) (Ehrlichia sennetsu).